A 218-amino-acid polypeptide reads, in one-letter code: Leucine-rich repeat protein 2 (218 aa).

The first 27 residues, 1–27, serve as a signal peptide directing secretion; it reads MVAQNSRRELLAASLILTLALIRLTEA. 5 LRR repeats span residues 69 to 93, 94 to 117, 119 to 141, 142 to 165, and 167 to 190; these read HHQVTRLDLGNSNLSGHLVPELGKL, EHLQYLELYKNEIQGTIPSELGNL, SLISLDLYNNNLTGKIPSSLGKL, KSLVFLRLNENRLTGPIPRELTVI, and SLKVVDVSGNDLCGTIPVEGPFEH.

In terms of biological role, probably involved in plant defense response. This chain is Leucine-rich repeat protein 2, found in Arabidopsis thaliana (Mouse-ear cress).